A 79-amino-acid chain; its full sequence is Defensin-like protein 3 (79 aa).

The N-terminal stretch at 1 to 29 is a signal peptide; it reads MAKFASIVALLFAALVVFAAFEAPTVVEA. 4 disulfide bridges follow: C32/C79, C43/C64, C49/C73, and C53/C75.

The protein belongs to the DEFL family.

It localises to the secreted. Its function is as follows. Possesses antifungal activity sensitive to inorganic cations. This is Defensin-like protein 3 (AFP3) from Raphanus sativus (Radish).